A 216-amino-acid chain; its full sequence is Eukaryotic translation initiation factor isoform 4E-2 (216 aa).

The tract at residues 1–23 is disordered; the sequence is MAEVEAPATAVEAPAAAVATTTP. Cys113 and Cys152 form a disulfide bridge.

It belongs to the eukaryotic initiation factor 4E family. EIF4F is a multi-subunit complex, the composition of which varies with external and internal environmental conditions. It is composed of at least EIF4A, EIF4E and EIF4G. EIF4E is also known to interact with other partners. In higher plants two isoforms of EIF4F have been identified, named isoform EIF4F and isoform EIF(iso)4F. Isoform EIF4F has subunits p220 and p26, whereas isoform EIF(iso)4F has subunits p82 and p28. In terms of processing, according to the redox status, the Cys-113-Cys-152 disulfide bridge may have a role in regulating protein function by affecting its ability to bind capped mRNA.

Recognizes and binds the 7-methylguanosine-containing mRNA cap during an early step in the initiation of protein synthesis and facilitates ribosome binding by inducing the unwinding of the mRNAs secondary structures. This Zea mays (Maize) protein is Eukaryotic translation initiation factor isoform 4E-2.